Here is a 573-residue protein sequence, read N- to C-terminus: Glutathione/L-cysteine transport system ATP-binding/permease protein CydC (573 aa).

Topologically, residues 1 to 15 are cytoplasmic; sequence MRALLPYLALYKRHK. The next 2 membrane-spanning stretches (helical) occupy residues 16–36 and 37–57; these read WMLS…IGLL and TLSG…LYSF. Residues 20-306 form the ABC transmembrane type-1 domain; that stretch reads LGIVLAIVTL…VTGAFQHLGQ (287 aa). Topologically, residues 58–136 are cytoplasmic; the sequence is NYMLPAAGVR…VDTLDHLYLR (79 aa). The helical transmembrane segment at 137–157 threads the bilayer; sequence VISPLVGAFVVIMVVTIGLSF. Topologically, residues 158–161 are periplasmic; it reads LDFT. Residues 162–182 traverse the membrane as a helical segment; that stretch reads LAFTLGGIMLLTLFLMPPLFY. The Cytoplasmic segment spans residues 183–249; the sequence is RAGKSTGQNL…QSELTALSQA (67 aa). Residues 250–270 traverse the membrane as a helical segment; that stretch reads IMLLIGALAVILMLWMASGGV. At 271–276 the chain is on the periplasmic side; it reads GGNAQP. The helical transmembrane segment at 277–297 threads the bilayer; sequence GALIALFVFCALAAFEALAPV. Topologically, residues 298-573 are cytoplasmic; it reads TGAFQHLGQV…GRYYQFKQGL (276 aa). An ABC transporter domain is found at 339 to 572; sequence LTLRDVQFTY…QGRYYQFKQG (234 aa). 373–380 serves as a coordination point for ATP; the sequence is GRTGCGKS.

Belongs to the ABC transporter superfamily. Cysteine exporter (TC 3.A.1.129.1) family. In terms of assembly, forms a heterodimer with CydD.

The protein localises to the cell inner membrane. It carries out the reaction L-cysteine(in) + ATP + H2O = L-cysteine(out) + ADP + phosphate + H(+). The catalysed reaction is glutathione(in) + ATP + H2O = glutathione(out) + ADP + phosphate + H(+). Its activity is regulated as follows. ATPase activity is stimulated by various thiol compounds. The presence of heme leads to a further enhancement of thiol-stimulated ATPase activity, although a large excess of heme inhibits activity. Glutathione transport is inhibited by sodium orthovanadate, an inhibitor of ABC-type transport systems, but not by the proton ionophore carbonyl cyanide m-chlorophenylhydrazone (CCCP). Part of the ABC transporter complex CydDC that exports the reduced low-molecular-weight thiols cysteine and glutathione to the periplasm. Export of these thiol-containing redox-active molecules may be crucial for redox homeostasis in the periplasm, permitting correct assembly of various respiratory complexes and formation of correct disulfide bonds in periplasmic and secreted proteins. CydC contains transmembrane domains (TMD), which form a pore in the inner membrane, and an ATP-binding domain (NBD), which is responsible for energy generation. Required for the assembly of functional cytochrome bd-type quinol oxidases and periplasmic c-type cytochromes. Overexpression of CydDC under anaerobic conditions also results in the formation of a heme biosynthesis-derived pigment, P-574. CydDC binds heme b, but heme is probably not transported by the complex and instead has a role in regulating ATPase activity. In terms of biological role, conversely, a more recent study suggests an alternative function of CydDC: authors suggest that CydDC does not mediate the export of L-cysteine but rather reduces cytoplasmic L-cystine to L-cysteine. The principle function of CydDC would be to maintain the reduced state of cytoplasmic L-cysteine, thereby providing an important connection between sulfur metabolism, oxidative stress and resistance to antibiotics. The sequence is that of Glutathione/L-cysteine transport system ATP-binding/permease protein CydC from Escherichia coli (strain K12).